A 271-amino-acid chain; its full sequence is uncharacterized protein (271 aa).

This is an uncharacterized protein from Acanthamoeba polyphaga mimivirus (APMV).